A 754-amino-acid chain; its full sequence is 5-methyltetrahydropteroyltriglutamate--homocysteine methyltransferase (754 aa).

5-methyltetrahydropteroyltri-L-glutamate-binding positions include 15–18 and lysine 114; that span reads RELK. Residues 430 to 432 and glutamate 483 contribute to the L-homocysteine site; that span reads IGS. L-methionine is bound by residues 430-432 and glutamate 483; that span reads IGS. 5-methyltetrahydropteroyltri-L-glutamate is bound by residues 514-515 and tryptophan 560; that span reads RC. Aspartate 598 lines the L-homocysteine pocket. Residue aspartate 598 coordinates L-methionine. Glutamate 604 is a 5-methyltetrahydropteroyltri-L-glutamate binding site. Positions 641, 643, and 665 each coordinate Zn(2+). The Proton donor role is filled by histidine 694. Cysteine 726 contributes to the Zn(2+) binding site.

Belongs to the vitamin-B12 independent methionine synthase family. Requires Zn(2+) as cofactor.

It carries out the reaction 5-methyltetrahydropteroyltri-L-glutamate + L-homocysteine = tetrahydropteroyltri-L-glutamate + L-methionine. It functions in the pathway amino-acid biosynthesis; L-methionine biosynthesis via de novo pathway; L-methionine from L-homocysteine (MetE route): step 1/1. Its function is as follows. Catalyzes the transfer of a methyl group from 5-methyltetrahydrofolate to homocysteine resulting in methionine formation. The chain is 5-methyltetrahydropteroyltriglutamate--homocysteine methyltransferase from Campylobacter jejuni subsp. jejuni serotype O:2 (strain ATCC 700819 / NCTC 11168).